A 158-amino-acid polypeptide reads, in one-letter code: 2-C-methyl-D-erythritol 2,4-cyclodiphosphate synthase (158 aa).

A divalent metal cation contacts are provided by Asp-9 and His-11. 4-CDP-2-C-methyl-D-erythritol 2-phosphate contacts are provided by residues Asp-9–His-11 and His-35–Ser-36. Residue His-43 coordinates a divalent metal cation. 4-CDP-2-C-methyl-D-erythritol 2-phosphate is bound by residues Asp-57 to Gly-59, Phe-62 to Asp-66, Ala-101 to Ala-107, Thr-133 to Glu-136, Phe-140, and Arg-143.

This sequence belongs to the IspF family. As to quaternary structure, homotrimer. A divalent metal cation serves as cofactor.

The catalysed reaction is 4-CDP-2-C-methyl-D-erythritol 2-phosphate = 2-C-methyl-D-erythritol 2,4-cyclic diphosphate + CMP. It functions in the pathway isoprenoid biosynthesis; isopentenyl diphosphate biosynthesis via DXP pathway; isopentenyl diphosphate from 1-deoxy-D-xylulose 5-phosphate: step 4/6. Its function is as follows. Involved in the biosynthesis of isopentenyl diphosphate (IPP) and dimethylallyl diphosphate (DMAPP), two major building blocks of isoprenoid compounds. Catalyzes the conversion of 4-diphosphocytidyl-2-C-methyl-D-erythritol 2-phosphate (CDP-ME2P) to 2-C-methyl-D-erythritol 2,4-cyclodiphosphate (ME-CPP) with a corresponding release of cytidine 5-monophosphate (CMP). The sequence is that of 2-C-methyl-D-erythritol 2,4-cyclodiphosphate synthase from Bacillus pumilus (strain SAFR-032).